The chain runs to 132 residues: Small ribosomal subunit protein uS8 (132 aa).

It belongs to the universal ribosomal protein uS8 family. As to quaternary structure, part of the 30S ribosomal subunit. Contacts proteins S5 and S12.

Functionally, one of the primary rRNA binding proteins, it binds directly to 16S rRNA central domain where it helps coordinate assembly of the platform of the 30S subunit. The polypeptide is Small ribosomal subunit protein uS8 (Ehrlichia ruminantium (strain Welgevonden)).